A 309-amino-acid chain; its full sequence is MRKIIVGSRKSKLALTQTNWFIDQLKALGLPYEFEVKEIVTKGDVILDVTLSKVGGKGLFVKEIEHALLTKEIDMAVHSMKDMPAVLPEGLMIGCTPKRVDPRDAFISKSGASFKELAEGAILGTSSLRRSAQLLAARPDLQVKWIRGNIDTRLRKLKEEDYDAIILATAGLQRMGWDDEVITEHLDETLCVPAVGQGALAIECREDDKDLLQLLAHINDAVTERTVAAERVFLHKLEGGCQVPIAGYATLTENDAIELTALVGSMDGSILLKETVVGTDPEKVGLEAADRLIKQGAKELILAANKGQQ.

Residue C241 is modified to S-(dipyrrolylmethanemethyl)cysteine.

Belongs to the HMBS family. Monomer. The cofactor is dipyrromethane.

It carries out the reaction 4 porphobilinogen + H2O = hydroxymethylbilane + 4 NH4(+). Its pathway is porphyrin-containing compound metabolism; protoporphyrin-IX biosynthesis; coproporphyrinogen-III from 5-aminolevulinate: step 2/4. In terms of biological role, tetrapolymerization of the monopyrrole PBG into the hydroxymethylbilane pre-uroporphyrinogen in several discrete steps. This chain is Porphobilinogen deaminase, found in Bacillus thuringiensis subsp. konkukian (strain 97-27).